The sequence spans 394 residues: MNNSNRLRLTWISYFSYALTGALVIVTGMVMGNIAEYFNLPIASMSNTFTFLNAGILISIFLNAWLMEIIPLKRQLVFGFILMLIAIAGLMVGHNLMIFSISMFILGVVSGITMSIGTFLITHMYEGRQRGSRLLFTDSFFSMAGMIFPVAAAILLARHIEWYWVYACIGLLYVGIFVLTLCSEFPVLGHKATDQSKPVAKEKWGMGVLFLAIAALCYILGQLGFIQWVPEYATKTFNMDISQAGQLVSNFWISYMIGMWVFSFILRFFDLQRIVTVLAALATLSMYMFVSTNNPEHLSYYILALGFVSSAIYTTLITLGSLQTKVSSPKLVNFILTCGTVGTMLTFVVTGPIVANSGVHAALATANGLYLTVFVMCLILGFFTKHRSHGHVTH.

12 helical membrane-spanning segments follow: residues 11-31 (WISY…GMVM), 51-71 (FLNA…EIIP), 76-96 (LVFG…GHNL), 101-121 (ISMF…TFLI), 134-154 (LLFT…AAAI), 162-182 (WYWV…LTLC), 206-226 (MGVL…LGFI), 246-266 (QLVS…SFIL), 274-294 (IVTV…STNN), 302-322 (ILAL…LGSL), 334-354 (FILT…GPIV), and 363-383 (LATA…LGFF).

This sequence belongs to the major facilitator superfamily. TsgA family.

The protein resides in the cell inner membrane. The chain is Protein TsgA homolog from Yersinia enterocolitica serotype O:8 / biotype 1B (strain NCTC 13174 / 8081).